Reading from the N-terminus, the 101-residue chain is Putative pterin-4-alpha-carbinolamine dehydratase (101 aa).

This sequence belongs to the pterin-4-alpha-carbinolamine dehydratase family.

It carries out the reaction (4aS,6R)-4a-hydroxy-L-erythro-5,6,7,8-tetrahydrobiopterin = (6R)-L-erythro-6,7-dihydrobiopterin + H2O. In Rhodopseudomonas palustris (strain HaA2), this protein is Putative pterin-4-alpha-carbinolamine dehydratase.